Here is a 120-residue protein sequence, read N- to C-terminus: MRATGSVASRCRRKRILKQAKGFWGDRKGHFRQSRSSVMRAMAFNYMHRKDRKGDFRSLWIARLNVASRINGLSYSRLINGLKCAGIDLNRKMLSEMAIHNPTGFAEVANQAKKALEANL.

This sequence belongs to the bacterial ribosomal protein bL20 family.

In terms of biological role, binds directly to 23S ribosomal RNA and is necessary for the in vitro assembly process of the 50S ribosomal subunit. It is not involved in the protein synthesizing functions of that subunit. This Chlamydia abortus (strain DSM 27085 / S26/3) (Chlamydophila abortus) protein is Large ribosomal subunit protein bL20.